The primary structure comprises 447 residues: UDP-N-acetylmuramoylalanine--D-glutamate ligase (447 aa).

An ATP-binding site is contributed by Gly112 to Thr118.

The protein belongs to the MurCDEF family.

It is found in the cytoplasm. It catalyses the reaction UDP-N-acetyl-alpha-D-muramoyl-L-alanine + D-glutamate + ATP = UDP-N-acetyl-alpha-D-muramoyl-L-alanyl-D-glutamate + ADP + phosphate + H(+). It functions in the pathway cell wall biogenesis; peptidoglycan biosynthesis. Its function is as follows. Cell wall formation. Catalyzes the addition of glutamate to the nucleotide precursor UDP-N-acetylmuramoyl-L-alanine (UMA). The chain is UDP-N-acetylmuramoylalanine--D-glutamate ligase from Legionella pneumophila (strain Lens).